We begin with the raw amino-acid sequence, 296 residues long: Ribosomal protein L11 methyltransferase (296 aa).

S-adenosyl-L-methionine contacts are provided by threonine 151, glycine 172, aspartate 194, and asparagine 233.

This sequence belongs to the methyltransferase superfamily. PrmA family.

It localises to the cytoplasm. It catalyses the reaction L-lysyl-[protein] + 3 S-adenosyl-L-methionine = N(6),N(6),N(6)-trimethyl-L-lysyl-[protein] + 3 S-adenosyl-L-homocysteine + 3 H(+). Functionally, methylates ribosomal protein L11. This chain is Ribosomal protein L11 methyltransferase, found in Dechloromonas aromatica (strain RCB).